Consider the following 472-residue polypeptide: Clampless protein 1 (472 aa).

Residues asparagine 70 and asparagine 296 are each glycosylated (N-linked (GlcNAc...) asparagine).

In terms of biological role, required for developmental progression after cells of opposite mating types fuse with one another, essential for processes common to both dikaryotic filament formation and monokaryotic fruiting. A direct target for transcription factors Sxi1-alpha and Sxi2-a. The polypeptide is Clampless protein 1 (Cryptococcus neoformans var. neoformans serotype D (strain B-3501A) (Filobasidiella neoformans)).